The following is a 712-amino-acid chain: Polyribonucleotide nucleotidyltransferase (712 aa).

The Mg(2+) site is built by aspartate 487 and aspartate 493. Residues 554 to 613 form the KH domain; sequence PKIITMTINPDKIRDVIGPSGKQINKIIEETGVKIDIEQDGTVFISSINQEMNDKAKKII. One can recognise an S1 motif domain in the interval 623–691; that stretch reads GEIYEGKVKR…KQGRVNLSRK (69 aa).

It belongs to the polyribonucleotide nucleotidyltransferase family. Mg(2+) serves as cofactor.

It localises to the cytoplasm. The enzyme catalyses RNA(n+1) + phosphate = RNA(n) + a ribonucleoside 5'-diphosphate. Functionally, involved in mRNA degradation. Catalyzes the phosphorolysis of single-stranded polyribonucleotides processively in the 3'- to 5'-direction. The sequence is that of Polyribonucleotide nucleotidyltransferase from Bacillus cereus (strain AH187).